Here is a 588-residue protein sequence, read N- to C-terminus: Schlafen family member 12-like (588 aa).

The helical transmembrane segment at 566–586 threads the bilayer; it reads IFLFVCLFRFCLFVCWFVCFF.

It belongs to the Schlafen family.

It localises to the membrane. The chain is Schlafen family member 12-like (SLFN12L) from Homo sapiens (Human).